A 260-amino-acid chain; its full sequence is MEIPDVTMTINSTNASADTASLDATLAGLDLAGRLSFVAGLGGRAVFTTSLGIEDQVITAAIGTHRLPIDVVTLETGRLFKETVDLIDETEERFGIEIRRFRPEQDDIDAYAAKYGLNGFYESVEARHACCHVRKLIPLGKALEGAAFWITGLRRGQSGNRAATPFAEFDAERNLIKINALADWDIEQIRAYVAEENIPVNPLHQRGYPSIGCEPCTRAIKPGEPERAGRWWWENDEKRECGLHVAGAEQTPPVSAIPQR.

[4Fe-4S] cluster-binding residues include cysteine 130, cysteine 131, cysteine 213, and cysteine 216. Residue cysteine 241 is the Nucleophile; cysteine thiosulfonate intermediate of the active site.

Belongs to the PAPS reductase family. CysH subfamily. Requires [4Fe-4S] cluster as cofactor.

The protein localises to the cytoplasm. The enzyme catalyses [thioredoxin]-disulfide + sulfite + AMP + 2 H(+) = adenosine 5'-phosphosulfate + [thioredoxin]-dithiol. It participates in sulfur metabolism; hydrogen sulfide biosynthesis; sulfite from sulfate. Its function is as follows. Catalyzes the formation of sulfite from adenosine 5'-phosphosulfate (APS) using thioredoxin as an electron donor. The chain is Adenosine 5'-phosphosulfate reductase from Agrobacterium fabrum (strain C58 / ATCC 33970) (Agrobacterium tumefaciens (strain C58)).